We begin with the raw amino-acid sequence, 461 residues long: Gustatory and pheromone receptor 32a (461 aa).

The Cytoplasmic segment spans residues 1 to 100; sequence MSPNTWVIEM…YSFFVRGVVH (100 aa). The chain crosses the membrane as a helical span at residues 101-121; it reads ALTIFNVYSLFTPISAQLFFS. Over 122–127 the chain is Extracellular; it reads YRETDN. A helical transmembrane segment spans residues 128–148; the sequence is VNQWIELLLCILTYTLTVFVC. Topologically, residues 149 to 180 are cytoplasmic; sequence AHNTTSMLRIMNEILQLDEEVRRQFGANLSQN. Residues 181–201 form a helical membrane-spanning segment; sequence FGFLVKFLVGITACQAYIIVL. The Extracellular segment spans residues 202–214; it reads KIYAVQGEITPTS. The chain crosses the membrane as a helical span at residues 215-235; that stretch reads YILLAFYGIQNGLTATYIVFA. Residues 236–317 lie on the Cytoplasmic side of the membrane; the sequence is SALLRIVYIR…YKGINDCCNL (82 aa). The chain crosses the membrane as a helical span at residues 318 to 338; it reads ILVSFLGYSFYTVTTNCYNLF. Residues 339 to 348 lie on the Extracellular side of the membrane; the sequence is VQITGKGMVS. Residues 349-369 traverse the membrane as a helical segment; sequence PNILQWCFAWLCLHVSLLALL. At 370–414 the chain is on the cytoplasmic side; it reads SRSCGLTTTEANATSQILARVYAKSKEYQNIIDKFLTKSIKQEVQ. Residues 415–435 traverse the membrane as a helical segment; sequence FTAYGFFAIDNSTLFKIFSAV. Topologically, residues 436–461 are extracellular; sequence TTYLVILIQFKQLEDSKVEDPVPEQT.

The protein belongs to the insect chemoreceptor superfamily. Gustatory receptor (GR) family. Gr21a subfamily. As to expression, expressed in the adult labellar chemosensory neurons. Expressed in tarsal neurons for male-male courtship suppression. In larvae, is expressed in neurons of the terminal external chemosensory organ, and the dorsal and posterior external chemosensory organs.

It is found in the cell membrane. Gustatory receptor which mediates acceptance or avoidance behavior, depending on its substrates. Required for the response to N,N-Diethyl-meta-toluamide (DEET), the most widely used insect repellent worldwide. Functions as a pheromone receptor for a male inhibitory pheromone and promotes male-male aggression and suppresses male-male courtship. Also promotes preferentially virgin females courting over mated females. This Drosophila melanogaster (Fruit fly) protein is Gustatory and pheromone receptor 32a (Gr32a).